The sequence spans 195 residues: Phosphoribosylglycinamide formyltransferase (195 aa).

Residue 12–14 (GSN) coordinates N(1)-(5-phospho-beta-D-ribosyl)glycinamide. Residues Lys65, 90-93 (MRLI), and Asn107 contribute to the (6R)-10-formyltetrahydrofolate site. His109 (proton donor) is an active-site residue.

The protein belongs to the GART family.

The enzyme catalyses N(1)-(5-phospho-beta-D-ribosyl)glycinamide + (6R)-10-formyltetrahydrofolate = N(2)-formyl-N(1)-(5-phospho-beta-D-ribosyl)glycinamide + (6S)-5,6,7,8-tetrahydrofolate + H(+). It participates in purine metabolism; IMP biosynthesis via de novo pathway; N(2)-formyl-N(1)-(5-phospho-D-ribosyl)glycinamide from N(1)-(5-phospho-D-ribosyl)glycinamide (10-formyl THF route): step 1/1. In terms of biological role, catalyzes the transfer of a formyl group from 10-formyltetrahydrofolate to 5-phospho-ribosyl-glycinamide (GAR), producing 5-phospho-ribosyl-N-formylglycinamide (FGAR) and tetrahydrofolate. The protein is Phosphoribosylglycinamide formyltransferase of Bacillus subtilis (strain 168).